The sequence spans 231 residues: 2-C-methyl-D-erythritol 4-phosphate cytidylyltransferase (231 aa).

The protein belongs to the IspD/TarI cytidylyltransferase family. IspD subfamily.

It catalyses the reaction 2-C-methyl-D-erythritol 4-phosphate + CTP + H(+) = 4-CDP-2-C-methyl-D-erythritol + diphosphate. It functions in the pathway isoprenoid biosynthesis; isopentenyl diphosphate biosynthesis via DXP pathway; isopentenyl diphosphate from 1-deoxy-D-xylulose 5-phosphate: step 2/6. Its function is as follows. Catalyzes the formation of 4-diphosphocytidyl-2-C-methyl-D-erythritol from CTP and 2-C-methyl-D-erythritol 4-phosphate (MEP). In Xylella fastidiosa (strain 9a5c), this protein is 2-C-methyl-D-erythritol 4-phosphate cytidylyltransferase.